We begin with the raw amino-acid sequence, 381 residues long: Creatine kinase B-type (381 aa).

Residue S4 is modified to Phosphoserine. A Phosphagen kinase N-terminal domain is found at 11–98; that stretch reads KLRFPAEDEF…FDPIIEDRHG (88 aa). The residue at position 35 (T35) is a Phosphothreonine. K45 is covalently cross-linked (Glycyl lysine isopeptide (Lys-Gly) (interchain with G-Cter in ubiquitin)). V72 serves as a coordination point for creatine. Residues 96-110 show a composition bias toward basic and acidic residues; sequence RHGGYKPSDEHKTDL. The tract at residues 96 to 123 is disordered; sequence RHGGYKPSDEHKTDLNPDNLQGGDDLDP. Residues K101 and K107 each participate in a glycyl lysine isopeptide (Lys-Gly) (interchain with G-Cter in ubiquitin) cross-link. A Phosphotyrosine modification is found at Y125. The region spanning 125–367 is the Phosphagen kinase C-terminal domain; the sequence is YVLSSRVRTG…KLLIEMEQRL (243 aa). ATP-binding positions include 128–132, R130, R132, and H191; that span reads SSRVR. The internal MTS-like signal stretch occupies residues 130–138; that stretch reads RVRTGRSIR. Phosphoserine is present on S199. E232 is a binding site for creatine. R236 is an ATP binding site. A 3'-nitrotyrosine modification is found at Y269. Residue S285 coordinates creatine. R292 is a binding site for ATP. At S309 the chain carries Phosphoserine. Residues R320, 320 to 325, and D335 each bind ATP; that span reads RGTGGV. The residue at position 322 (T322) is a Phosphothreonine. Residue K381 forms a Glycyl lysine isopeptide (Lys-Gly) (interchain with G-Cter in ubiquitin) linkage.

It belongs to the ATP:guanido phosphotransferase family. As to quaternary structure, dimer of identical or non-identical chains, which can be either B (brain type) or M (muscle type). With MM being the major form in skeletal muscle and myocardium, MB existing in myocardium, and BB existing in many tissues, especially brain. Interacts with SLC12A6 (via C-terminus); the interaction may be required for SLC12A6 potassium-chloride cotransport activity. Post-translationally, ubiquitinated by the ECS(ASB9) complex, leading to its degradation by the proteasome.

It localises to the cytoplasm. The protein resides in the cytosol. Its subcellular location is the mitochondrion. The protein localises to the cell membrane. It catalyses the reaction creatine + ATP = N-phosphocreatine + ADP + H(+). Reversibly catalyzes the transfer of phosphate between ATP and various phosphogens (e.g. creatine phosphate). Creatine kinase isoenzymes play a central role in energy transduction in tissues with large, fluctuating energy demands, such as skeletal muscle, heart, brain and spermatozoa. Acts as a key regulator of adaptive thermogenesis as part of the futile creatine cycle: localizes to the mitochondria of thermogenic fat cells and acts by mediating phosphorylation of creatine to initiate a futile cycle of creatine phosphorylation and dephosphorylation. During the futile creatine cycle, creatine and N-phosphocreatine are in a futile cycle, which dissipates the high energy charge of N-phosphocreatine as heat without performing any mechanical or chemical work. The protein is Creatine kinase B-type (CKB) of Oryctolagus cuniculus (Rabbit).